Here is a 503-residue protein sequence, read N- to C-terminus: AMP phosphorylase (503 aa).

AMP contacts are provided by residues Gly168, 194-199, and Thr203; that span reads SRAITS. The active-site Proton donor is the Asp256. 2 residues coordinate AMP: Ser264 and Lys288.

The protein belongs to the thymidine/pyrimidine-nucleoside phosphorylase family. Type 2 subfamily.

The enzyme catalyses AMP + phosphate = alpha-D-ribose 1,5-bisphosphate + adenine. The catalysed reaction is CMP + phosphate = cytosine + alpha-D-ribose 1,5-bisphosphate. It catalyses the reaction UMP + phosphate = alpha-D-ribose 1,5-bisphosphate + uracil. Functionally, catalyzes the conversion of AMP and phosphate to adenine and ribose 1,5-bisphosphate (R15P). Exhibits phosphorylase activity toward CMP and UMP in addition to AMP. Functions in an archaeal AMP degradation pathway, together with R15P isomerase and RubisCO. The chain is AMP phosphorylase from Pyrococcus furiosus (strain ATCC 43587 / DSM 3638 / JCM 8422 / Vc1).